Reading from the N-terminus, the 160-residue chain is Nuclear transcription factor Y subunit B-5 (160 aa).

Residues 56–62 (LPIANVG) mediate DNA binding. The segment at 83-94 (MQECVSEFISFV) is subunit association domain (SAD).

This sequence belongs to the NFYB/HAP3 subunit family. Heterotrimeric transcription factor composed of three components, NF-YA, NF-YB and NF-YC. NF-YB and NF-YC must interact and dimerize for NF-YA association and DNA binding. As to expression, expressed in flowers and siliques.

The protein resides in the nucleus. Component of the NF-Y/HAP transcription factor complex. The NF-Y complex stimulates the transcription of various genes by recognizing and binding to a CCAAT motif in promoters. This Arabidopsis thaliana (Mouse-ear cress) protein is Nuclear transcription factor Y subunit B-5 (NFYB5).